The following is a 186-amino-acid chain: Elongation factor P (186 aa).

This sequence belongs to the elongation factor P family.

It localises to the cytoplasm. The protein operates within protein biosynthesis; polypeptide chain elongation. In terms of biological role, involved in peptide bond synthesis. Stimulates efficient translation and peptide-bond synthesis on native or reconstituted 70S ribosomes in vitro. Probably functions indirectly by altering the affinity of the ribosome for aminoacyl-tRNA, thus increasing their reactivity as acceptors for peptidyl transferase. The sequence is that of Elongation factor P from Elusimicrobium minutum (strain Pei191).